A 234-amino-acid chain; its full sequence is tRNA (guanine-N(1)-)-methyltransferase (234 aa).

Residues Gly112 and Ile132 to Leu137 contribute to the S-adenosyl-L-methionine site.

This sequence belongs to the RNA methyltransferase TrmD family. In terms of assembly, homodimer.

Its subcellular location is the cytoplasm. The catalysed reaction is guanosine(37) in tRNA + S-adenosyl-L-methionine = N(1)-methylguanosine(37) in tRNA + S-adenosyl-L-homocysteine + H(+). Specifically methylates guanosine-37 in various tRNAs. This chain is tRNA (guanine-N(1)-)-methyltransferase, found in Campylobacter jejuni subsp. doylei (strain ATCC BAA-1458 / RM4099 / 269.97).